Consider the following 90-residue polypeptide: DNA-directed RNA polymerase subunit Rpo5 (90 aa).

This sequence belongs to the archaeal Rpo5/eukaryotic RPB5 RNA polymerase subunit family. As to quaternary structure, part of the RNA polymerase complex.

Its subcellular location is the cytoplasm. It carries out the reaction RNA(n) + a ribonucleoside 5'-triphosphate = RNA(n+1) + diphosphate. DNA-dependent RNA polymerase (RNAP) catalyzes the transcription of DNA into RNA using the four ribonucleoside triphosphates as substrates. This chain is DNA-directed RNA polymerase subunit Rpo5, found in Aeropyrum pernix (strain ATCC 700893 / DSM 11879 / JCM 9820 / NBRC 100138 / K1).